Here is a 1203-residue protein sequence, read N- to C-terminus: DNA-directed RNA polymerase subunit beta (1203 aa).

Over residues 1174 to 1195 (AAQEAKAAFEAEEAEKATKAEA) the composition is skewed to basic and acidic residues. The interval 1174–1203 (AAQEAKAAFEAEEAEKATKAEATEEAAEQE) is disordered.

This sequence belongs to the RNA polymerase beta chain family. The RNAP catalytic core consists of 2 alpha, 1 beta, 1 beta' and 1 omega subunit. When a sigma factor is associated with the core the holoenzyme is formed, which can initiate transcription.

It carries out the reaction RNA(n) + a ribonucleoside 5'-triphosphate = RNA(n+1) + diphosphate. Functionally, DNA-dependent RNA polymerase catalyzes the transcription of DNA into RNA using the four ribonucleoside triphosphates as substrates. The protein is DNA-directed RNA polymerase subunit beta of Streptococcus pneumoniae serotype 19F (strain G54).